A 226-amino-acid polypeptide reads, in one-letter code: Phosphoglycolate phosphatase (226 aa).

The Nucleophile role is filled by D12. Mg(2+) contacts are provided by D12, D14, and D177.

Belongs to the HAD-like hydrolase superfamily. CbbY/CbbZ/Gph/YieH family. Mg(2+) serves as cofactor.

The catalysed reaction is 2-phosphoglycolate + H2O = glycolate + phosphate. It participates in organic acid metabolism; glycolate biosynthesis; glycolate from 2-phosphoglycolate: step 1/1. In terms of biological role, specifically catalyzes the dephosphorylation of 2-phosphoglycolate. Is involved in the dissimilation of the intracellular 2-phosphoglycolate formed during the DNA repair of 3'-phosphoglycolate ends, a major class of DNA lesions induced by oxidative stress. The chain is Phosphoglycolate phosphatase from Colwellia psychrerythraea (strain 34H / ATCC BAA-681) (Vibrio psychroerythus).